The following is a 260-amino-acid chain: Cytochrome c1-2, heme protein, mitochondrial (260 aa).

Residues 1 to 17 (IGAGVSGLLGFATVASA) constitute a mitochondrion transit peptide. Over 18–221 (DEAEHGLECP…AAEPEMEERK (204 aa)) the chain is Mitochondrial intermembrane. The 108-residue stretch at 43 to 150 (ASIRRGHQVY…NGQNYVFALL (108 aa)) folds into the Cytochrome c domain. Heme c contacts are provided by Cys56, Cys59, His60, and Met179. Residues 222–241 (LMGFKWIFVLSLALLQAAYY) traverse the membrane as a helical segment. Residues 242-260 (RRLRWSVLKSRKLVLDVVN) lie on the Mitochondrial matrix side of the membrane.

Belongs to the cytochrome c family. Component of the ubiquinol-cytochrome c oxidoreductase (cytochrome b-c1 complex, complex III, CIII), a multisubunit enzyme composed of 3 respiratory subunits cytochrome b, cytochrome c1 and Rieske protein, 2 core protein subunits, and additional low-molecular weight protein subunits. The complex exists as an obligatory dimer and forms supercomplexes (SCs) in the inner mitochondrial membrane with cytochrome c oxidase (complex IV, CIV). Heme c is required as a cofactor. In terms of tissue distribution, in all tissues analyzed.

The protein resides in the mitochondrion inner membrane. It catalyses the reaction a quinol + 2 Fe(III)-[cytochrome c](out) = a quinone + 2 Fe(II)-[cytochrome c](out) + 2 H(+)(out). Functionally, component of the ubiquinol-cytochrome c oxidoreductase, a multisubunit transmembrane complex that is part of the mitochondrial electron transport chain which drives oxidative phosphorylation. The respiratory chain contains 3 multisubunit complexes succinate dehydrogenase (complex II, CII), ubiquinol-cytochrome c oxidoreductase (cytochrome b-c1 complex, complex III, CIII) and cytochrome c oxidase (complex IV, CIV), that cooperate to transfer electrons derived from NADH and succinate to molecular oxygen, creating an electrochemical gradient over the inner membrane that drives transmembrane transport and the ATP synthase. The cytochrome b-c1 complex catalyzes electron transfer from ubiquinol to cytochrome c, linking this redox reaction to translocation of protons across the mitochondrial inner membrane, with protons being carried across the membrane as hydrogens on the quinol. In the process called Q cycle, 2 protons are consumed from the matrix, 4 protons are released into the intermembrane space and 2 electrons are passed to cytochrome c. Cytochrome c1 is a catalytic core subunit containing a c-type heme. It transfers electrons from the [2Fe-2S] iron-sulfur cluster of the Rieske protein to cytochrome c. In Solanum tuberosum (Potato), this protein is Cytochrome c1-2, heme protein, mitochondrial (CYCL).